A 388-amino-acid chain; its full sequence is 5-hydroxytryptamine receptor 4 (388 aa).

The Extracellular portion of the chain corresponds to 1 to 19 (MDKLDANVSSEEGFGSVEK). N7 is a glycosylation site (N-linked (GlcNAc...) asparagine). A helical membrane pass occupies residues 20–44 (VVLLTFLSTVILMAILGNLLVMVAV). Topologically, residues 45 to 54 (CWDRQLRKIK) are cytoplasmic. Residues 55–78 (TNYFIVSLAFADLLVSVLVMPFGA) traverse the membrane as a helical segment. Topologically, residues 79-92 (IELVQDIWIYGEVF) are extracellular. A helical membrane pass occupies residues 93 to 117 (CLVRTSLDVLLTTASIFHLCCISLD). A disulfide bond links C93 and C184. D100 serves as a coordination point for serotonin. The Cytoplasmic portion of the chain corresponds to 118–133 (RYYAICCQPLVYRNKM). A helical membrane pass occupies residues 134 to 157 (TPLRIALMLGGCWVIPTFISFLPI). The Extracellular portion of the chain corresponds to 158 to 188 (MQGWNNIGIIDLIEKRKFNQNSNSTYCVFMV). A helical transmembrane segment spans residues 189–212 (NKPYAITCSVVAFYIPFLLMVLAY). Residues 213–257 (YRIYVTAKEHAHQIQMLQRAGASSESRPQSADQHSTHRMRTETKA) lie on the Cytoplasmic side of the membrane. A helical membrane pass occupies residues 258–283 (AKTLCIIMGCFCLCWAPFFVTNIVDP). N279 contributes to the serotonin binding site. Topologically, residues 284–290 (FIDYTVP) are extracellular. A helical transmembrane segment spans residues 291–314 (GQVWTAFLWLGYINSGLNPFLYAF). At 315-388 (LNKSFRRAFL…PLVAAQPSDT (74 aa)) the chain is on the cytoplasmic side.

Belongs to the G-protein coupled receptor 1 family. In terms of assembly, interacts (via C-terminus 330-346 AA) with GRK5; this interaction is promoted by 5-HT (serotonin). As to quaternary structure, interacts with MAGI2, MPP3, NHERF1 and SNX27 isoforms 1 and 2. Forms a complex including NHERF1 and EZR. Interacts with PATJ, NOS1 and SEC23A. In terms of tissue distribution, expressed in ileum, brain, and atrium, but not in the ventricle. Mainly expressed in atria and cardiac ventricle. As to expression, expressed in all cardiovascular tissues analyzed.

The protein localises to the cell membrane. Its subcellular location is the endosome membrane. In terms of biological role, G-protein coupled receptor for 5-hydroxytryptamine (serotonin), a biogenic hormone that functions as a neurotransmitter, a hormone and a mitogen. Ligand binding causes a conformation change that triggers signaling via guanine nucleotide-binding proteins (G proteins) and modulates the activity of downstream effectors. HTR4 is coupled to G(s) G alpha proteins and mediates activation of adenylate cyclase activity. This is 5-hydroxytryptamine receptor 4 from Homo sapiens (Human).